A 141-amino-acid chain; its full sequence is uncharacterized protein (141 aa).

5 consecutive transmembrane segments (helical) span residues 7-27 (FWAL…KVGV), 34-54 (FATL…VAAT), 69-89 (LFLA…FRAL), 97-117 (VAPL…LFLG), and 121-141 (NLMN…LAVF). Positions 14–140 (AFAALTAVFA…IAAGALLLAV (127 aa)) constitute an EamA domain.

It belongs to the EamA transporter family.

It localises to the cell membrane. This is an uncharacterized protein from Sinorhizobium sp.